A 484-amino-acid chain; its full sequence is Synaptic vesicle membrane protein VAT-1 homolog (484 aa).

Low complexity-rich tracts occupy residues 1 to 13 (MSGEDAPAQQQNA) and 40 to 61 (SASTEAAATAAAAADTPAPAAE). Disordered stretches follow at residues 1 to 65 (MSGE…KAPE) and 402 to 484 (IGKI…KEEN). A compositionally biased stretch (basic and acidic residues) spans 411–484 (PMKEEEKKEE…KKEEVKKEEN (74 aa)).

It belongs to the zinc-containing alcohol dehydrogenase family. Quinone oxidoreductase subfamily.

This chain is Synaptic vesicle membrane protein VAT-1 homolog, found in Danio rerio (Zebrafish).